A 172-amino-acid chain; its full sequence is Large ribosomal subunit protein uL10 (172 aa).

It belongs to the universal ribosomal protein uL10 family. In terms of assembly, part of the ribosomal stalk of the 50S ribosomal subunit. The N-terminus interacts with L11 and the large rRNA to form the base of the stalk. The C-terminus forms an elongated spine to which L12 dimers bind in a sequential fashion forming a multimeric L10(L12)X complex.

Functionally, forms part of the ribosomal stalk, playing a central role in the interaction of the ribosome with GTP-bound translation factors. The protein is Large ribosomal subunit protein uL10 of Beijerinckia indica subsp. indica (strain ATCC 9039 / DSM 1715 / NCIMB 8712).